The following is a 368-amino-acid chain: Putative potassium channel KAT5 (368 aa).

The next 3 helical transmembrane spans lie at 33–53 (WWHM…PFEL), 97–117 (LLNL…ARVE), and 132–152 (LLCV…WMVF). The pore-forming intramembrane region spans 180 to 199 (CAVYWSITTLATVGYGDLHA). Residues 206-226 (LFSIAFMLFNMGLTSYIIGNI) form a helical membrane-spanning segment. 225-344 (NITNLVVRET…CIVFSNFILV (120 aa)) lines the a nucleoside 3',5'-cyclic phosphate pocket.

The protein belongs to the potassium channel family. Plant (TC 1.A.1.4) subfamily.

The protein localises to the membrane. Putative inward-rectifying potassium channel. This Oryza sativa subsp. japonica (Rice) protein is Putative potassium channel KAT5.